The primary structure comprises 23 residues: Magainin-BM2 (23 aa).

As to expression, expressed by the skin glands.

It localises to the secreted. Antimicrobial peptide. The polypeptide is Magainin-BM2 (Xenopus boumbaensis (Mawa clawed frog)).